The sequence spans 297 residues: Ketohexokinase (297 aa).

Residues D15, G41, N42, and N45 each coordinate beta-D-fructose. ATP contacts are provided by residues R107, 225–228 (AEEG), and 254–257 (GAGD). D257 serves as a coordination point for beta-D-fructose.

This sequence belongs to the carbohydrate kinase PfkB family. In terms of assembly, homodimer.

It catalyses the reaction beta-D-fructose + ATP = beta-D-fructose 1-phosphate + ADP + H(+). It participates in carbohydrate metabolism; fructose metabolism. With respect to regulation, requires potassium. Inhibition by ADP. In terms of biological role, catalyzes the phosphorylation of the ketose sugar fructose to fructose-1-phosphate. The chain is Ketohexokinase (KHK) from Pongo abelii (Sumatran orangutan).